The following is a 426-amino-acid chain: Enolase (426 aa).

Glutamine 163 contacts (2R)-2-phosphoglycerate. Glutamate 205 serves as the catalytic Proton donor. Residues aspartate 242, glutamate 286, and aspartate 313 each contribute to the Mg(2+) site. Residues lysine 338, arginine 367, serine 368, and lysine 389 each contribute to the (2R)-2-phosphoglycerate site. Residue lysine 338 is the Proton acceptor of the active site.

This sequence belongs to the enolase family. The cofactor is Mg(2+).

Its subcellular location is the cytoplasm. It is found in the secreted. The protein localises to the cell surface. It carries out the reaction (2R)-2-phosphoglycerate = phosphoenolpyruvate + H2O. Its pathway is carbohydrate degradation; glycolysis; pyruvate from D-glyceraldehyde 3-phosphate: step 4/5. Its function is as follows. Catalyzes the reversible conversion of 2-phosphoglycerate (2-PG) into phosphoenolpyruvate (PEP). It is essential for the degradation of carbohydrates via glycolysis. This chain is Enolase, found in Helicobacter pylori (strain HPAG1).